The primary structure comprises 699 residues: Osmotic avoidance abnormal protein 3 (699 aa).

Positions 4-327 (SVRVAVRCRP…LRYANRAKNI (324 aa)) constitute a Kinesin motor domain. Position 87 to 94 (87 to 94 (GQTGSGKT)) interacts with ATP. Positions 339 to 523 (DALLREYQEE…EIEDLHGEFE (185 aa)) form a coiled coil.

Belongs to the TRAFAC class myosin-kinesin ATPase superfamily. Kinesin family. Kinesin II subfamily. Expressed in an exclusive set of 26 chemosensory neurons whose dendritic endings are exposed to the external environment; six IL2 neurons of the inner labial sensilla, 8 pairs of amphid neurons in the head, and 2 pairs of phasmid neurons in the tail.

Its subcellular location is the cytoplasm. It is found in the cytoskeleton. The protein resides in the cell projection. The protein localises to the cilium. It localises to the cilium axoneme. Its subcellular location is the cilium basal body. In terms of biological role, kinesin motor protein which is required for the anterograde intraflagellar transport (IFT) along the middle segment of the sensory neuron cilia together with the kinesin II motor complex (composed of klp-11, klp-20 and kap-1) and on its own, is required for IFT along the distal segment. In addition, regulates the length of cilia. May have a role during neurogenesis and axonal transport. This chain is Osmotic avoidance abnormal protein 3, found in Caenorhabditis elegans.